The following is a 235-amino-acid chain: Peptidase E (235 aa).

Residues S122, D137, and H159 each act as charge relay system in the active site.

This sequence belongs to the peptidase S51 family.

It localises to the cytoplasm. It catalyses the reaction Dipeptidase E catalyzes the hydrolysis of dipeptides Asp-|-Xaa. It does not act on peptides with N-terminal Glu, Asn or Gln, nor does it cleave isoaspartyl peptides.. Hydrolyzes dipeptides containing N-terminal aspartate residues. May play a role in allowing the cell to use peptide aspartate to spare carbon otherwise required for the synthesis of the aspartate family of amino acids. This chain is Peptidase E, found in Shewanella amazonensis (strain ATCC BAA-1098 / SB2B).